A 235-amino-acid polypeptide reads, in one-letter code: Small capsomere-interacting protein (235 aa).

Positions 104 to 235 (PRIIRPQPPN…SGNASRSRRV (132 aa)) are disordered. Positions 127 to 139 (PQKTQSADQSALQ) are enriched in polar residues. Low complexity predominate over residues 158–188 (TTSASVGQQQHVVSGSSGQQPQQGAQSSTVQ). Residues 220–235 (LSHTGQSGNASRSRRV) show a composition bias toward polar residues.

The protein belongs to the herpesviridae small capsomere-interacting protein family. In terms of assembly, interacts with the major capsid protein/MCP.

It localises to the virion. It is found in the host nucleus. Participates in the assembly of the infectious particles by decorating the outer surface of the capsid shell and thus forming a layer between the capsid and the tegument. Complexes composed of the capsid protein VP5 and VP26 assemble together in the host cytoplasm and are translocated to the nucleus, where they accumulate and participate in capsid assembly. In terms of biological role, participates in the assembly of the infectious particles by decorating the outer surface of the capsid shell and thus forming a layer between the capsid and the tegument. Complexes composed of the major capsid protein and small capsomere-interacting protein/SCP assemble together in the host cytoplasm and are translocated to the nucleus, where they accumulate and participate in capsid assembly. The protein is Small capsomere-interacting protein of Homo sapiens (Human).